A 419-amino-acid polypeptide reads, in one-letter code: GTPase Obg (419 aa).

Residues 2 to 159 (SAFVDAVTVE…FLAKVELQVL (158 aa)) form the Obg domain. An OBG-type G domain is found at 160–325 (ADVGLLGYPN…LKYEIATTLK (166 aa)). GTP contacts are provided by residues 166-173 (GYPNVGKS), 191-195 (FTTLS), 212-215 (DLPG), 279-282 (NKMD), and 306-308 (SAL). Residues Ser-173 and Thr-193 each contribute to the Mg(2+) site. Residues 341–419 (LNAEDAVDFI…IFSYEFEYLE (79 aa)) enclose the OCT domain.

This sequence belongs to the TRAFAC class OBG-HflX-like GTPase superfamily. OBG GTPase family. In terms of assembly, monomer. It depends on Mg(2+) as a cofactor.

The protein resides in the cytoplasm. In terms of biological role, an essential GTPase which binds GTP, GDP and possibly (p)ppGpp with moderate affinity, with high nucleotide exchange rates and a fairly low GTP hydrolysis rate. Plays a role in control of the cell cycle, stress response, ribosome biogenesis and in those bacteria that undergo differentiation, in morphogenesis control. The protein is GTPase Obg of Acholeplasma laidlawii (strain PG-8A).